Consider the following 699-residue polypeptide: Long-chain-fatty-acid--CoA ligase 1 (699 aa).

Residue methionine 1 is modified to N-acetylmethionine. Tyrosine 9 bears the 3'-nitrotyrosine mark. The helical; Signal-anchor for type III membrane protein transmembrane segment at 25 to 45 (LPTNTLMGFGAFAALTTFWYA) threads the bilayer. The Cytoplasmic segment spans residues 46–699 (TRPKALKPPC…IDELYSTIKI (654 aa)). At tyrosine 85 the chain carries Phosphotyrosine. At tyrosine 86 the chain carries 3'-nitrotyrosine. Residue serine 136 is glycosylated (O-linked (GlcNAc) serine). An N6-acetyllysine mark is found at lysine 208, lysine 357, and lysine 387. The residue at position 621 (serine 621) is a Phosphoserine. Lysine 633 carries the post-translational modification N6-acetyllysine.

It belongs to the ATP-dependent AMP-binding enzyme family. Mg(2+) is required as a cofactor. As to expression, liver, heart, epididymal adipose and to a lesser extent brain, small intestine and lung.

Its subcellular location is the mitochondrion outer membrane. It is found in the peroxisome membrane. The protein localises to the microsome membrane. It localises to the endoplasmic reticulum membrane. The enzyme catalyses a long-chain fatty acid + ATP + CoA = a long-chain fatty acyl-CoA + AMP + diphosphate. It catalyses the reaction (5Z,8Z,11Z,14Z)-eicosatetraenoate + ATP + CoA = (5Z,8Z,11Z,14Z)-eicosatetraenoyl-CoA + AMP + diphosphate. The catalysed reaction is 3,7,11,15-tetramethylhexadecanoate + ATP + CoA = phytanoyl-CoA + AMP + diphosphate. It carries out the reaction hexadecanoate + ATP + CoA = hexadecanoyl-CoA + AMP + diphosphate. The enzyme catalyses (E)-hexadec-2-enoate + ATP + CoA = (2E)-hexadecenoyl-CoA + AMP + diphosphate. It catalyses the reaction 2,6,10,14-tetramethylpentadecanoate + ATP + CoA = pristanoyl-CoA + AMP + diphosphate. The catalysed reaction is 14,15-epoxy-(5Z,8Z,11Z)-eicosatrienoate + ATP + CoA = 14,15-epoxy-(5Z,8Z,11Z)-eicosatrienoyl-CoA + AMP + diphosphate. It carries out the reaction 5-hydroxy-(6E,8Z,11Z,14Z)-eicosatetraenoate + ATP + CoA = 5-hydroxy-(6E,8Z,11Z,14Z)-eicosatetraenoyl-CoA + AMP + diphosphate. The enzyme catalyses 12-hydroxy-(5Z,8Z,10E,14Z)-eicosatetraenoate + ATP + CoA = 12-hydroxy-(5Z,8Z,10E,14Z)-eicosatetraenoyl-CoA + AMP + diphosphate. It catalyses the reaction 15-hydroxy-(5Z,8Z,11Z,13E)-eicosatetraenoate + ATP + CoA = 15-hydroxy-(5Z,8Z,11Z,13E)-eicosatetraenoyl-CoA + AMP + diphosphate. The catalysed reaction is (9Z)-octadecenoate + ATP + CoA = (9Z)-octadecenoyl-CoA + AMP + diphosphate. Inhibited at high temperature and by arachidonate. In terms of biological role, catalyzes the conversion of long-chain fatty acids to their active form acyl-CoAs for both synthesis of cellular lipids, and degradation via beta-oxidation. Preferentially uses palmitoleate, oleate and linoleate. Preferentially activates arachidonate than epoxyeicosatrienoic acids (EETs) or hydroxyeicosatrienoic acids (HETEs). This Rattus norvegicus (Rat) protein is Long-chain-fatty-acid--CoA ligase 1.